The following is a 1025-amino-acid chain: Multidrug resistance protein MdtC (1025 aa).

12 helical membrane-spanning segments follow: residues 3–23 (FFAL…AITL), 333–353 (EVEQ…FLFL), 360–380 (IIPA…MYLC), 387–407 (LSLM…IVVL), 431–451 (VGFT…PLLL), 463–483 (FAVT…TLTP), 528–548 (LVGV…ISIP), 853–873 (VILI…LYES), 875–895 (VHPL…LLAL), 897–917 (LFNA…IGIV), 953–973 (PIMM…LSGG), and 984–1004 (ITIV…TPVV).

This sequence belongs to the resistance-nodulation-cell division (RND) (TC 2.A.6) family. MdtC subfamily. Part of a tripartite efflux system composed of MdtA, MdtB and MdtC. MdtC forms a heteromultimer with MdtB.

It localises to the cell inner membrane. Functionally, the MdtABC tripartite complex confers resistance against novobiocin and deoxycholate. The protein is Multidrug resistance protein MdtC of Escherichia coli O8 (strain IAI1).